A 314-amino-acid chain; its full sequence is Homoserine kinase (314 aa).

96 to 106 (PIGSGLGSSAC) is a binding site for ATP.

It belongs to the GHMP kinase family. Homoserine kinase subfamily.

It localises to the cytoplasm. It carries out the reaction L-homoserine + ATP = O-phospho-L-homoserine + ADP + H(+). It participates in amino-acid biosynthesis; L-threonine biosynthesis; L-threonine from L-aspartate: step 4/5. Functionally, catalyzes the ATP-dependent phosphorylation of L-homoserine to L-homoserine phosphate. This is Homoserine kinase from Mannheimia succiniciproducens (strain KCTC 0769BP / MBEL55E).